We begin with the raw amino-acid sequence, 200 residues long: Recombination protein RecR (200 aa).

The C4-type zinc finger occupies Cys57 to Cys72. Residues Thr80–Pro175 form the Toprim domain.

This sequence belongs to the RecR family.

Its function is as follows. May play a role in DNA repair. It seems to be involved in an RecBC-independent recombinational process of DNA repair. It may act with RecF and RecO. In Pseudomonas putida (strain ATCC 700007 / DSM 6899 / JCM 31910 / BCRC 17059 / LMG 24140 / F1), this protein is Recombination protein RecR.